We begin with the raw amino-acid sequence, 488 residues long: Phenylalanine--tRNA ligase alpha subunit (488 aa).

L-phenylalanine is bound by residues Thr315, 354–356 (QLD), Phe394, and Phe419.

This sequence belongs to the class-II aminoacyl-tRNA synthetase family. Phe-tRNA synthetase alpha subunit type 2 subfamily. In terms of assembly, tetramer of two alpha and two beta subunits. It depends on Mg(2+) as a cofactor.

The protein localises to the cytoplasm. The catalysed reaction is tRNA(Phe) + L-phenylalanine + ATP = L-phenylalanyl-tRNA(Phe) + AMP + diphosphate + H(+). In Pyrobaculum calidifontis (strain DSM 21063 / JCM 11548 / VA1), this protein is Phenylalanine--tRNA ligase alpha subunit.